Here is a 182-residue protein sequence, read N- to C-terminus: Flavin prenyltransferase UbiX (182 aa).

FMN contacts are provided by residues 9–11 (GAS), Ser35, 86–89 (SIKT), and Arg121. Positions 151 and 167 each coordinate dimethylallyl phosphate.

The protein belongs to the UbiX/PAD1 family.

It carries out the reaction dimethylallyl phosphate + FMNH2 = prenylated FMNH2 + phosphate. In terms of biological role, flavin prenyltransferase that catalyzes the synthesis of the prenylated FMN cofactor (prenyl-FMN) for 4-hydroxy-3-polyprenylbenzoic acid decarboxylase UbiD. The prenyltransferase is metal-independent and links a dimethylallyl moiety from dimethylallyl monophosphate (DMAP) to the flavin N5 and C6 atoms of FMN. This Archaeoglobus fulgidus (strain ATCC 49558 / DSM 4304 / JCM 9628 / NBRC 100126 / VC-16) protein is Flavin prenyltransferase UbiX.